The following is a 232-amino-acid chain: 2-C-methyl-D-erythritol 4-phosphate cytidylyltransferase (232 aa).

This sequence belongs to the IspD/TarI cytidylyltransferase family. IspD subfamily.

It catalyses the reaction 2-C-methyl-D-erythritol 4-phosphate + CTP + H(+) = 4-CDP-2-C-methyl-D-erythritol + diphosphate. The protein operates within isoprenoid biosynthesis; isopentenyl diphosphate biosynthesis via DXP pathway; isopentenyl diphosphate from 1-deoxy-D-xylulose 5-phosphate: step 2/6. Catalyzes the formation of 4-diphosphocytidyl-2-C-methyl-D-erythritol from CTP and 2-C-methyl-D-erythritol 4-phosphate (MEP). In Bacillus velezensis (strain DSM 23117 / BGSC 10A6 / LMG 26770 / FZB42) (Bacillus amyloliquefaciens subsp. plantarum), this protein is 2-C-methyl-D-erythritol 4-phosphate cytidylyltransferase.